The chain runs to 200 residues: ATP-dependent Clp protease proteolytic subunit (200 aa).

The Nucleophile role is filled by Ser-98. The active site involves His-123.

It belongs to the peptidase S14 family. Fourteen ClpP subunits assemble into 2 heptameric rings which stack back to back to give a disk-like structure with a central cavity, resembling the structure of eukaryotic proteasomes.

It is found in the cytoplasm. It carries out the reaction Hydrolysis of proteins to small peptides in the presence of ATP and magnesium. alpha-casein is the usual test substrate. In the absence of ATP, only oligopeptides shorter than five residues are hydrolyzed (such as succinyl-Leu-Tyr-|-NHMec, and Leu-Tyr-Leu-|-Tyr-Trp, in which cleavage of the -Tyr-|-Leu- and -Tyr-|-Trp bonds also occurs).. In terms of biological role, cleaves peptides in various proteins in a process that requires ATP hydrolysis. Has a chymotrypsin-like activity. Plays a major role in the degradation of misfolded proteins. This chain is ATP-dependent Clp protease proteolytic subunit, found in Ehrlichia canis (strain Jake).